We begin with the raw amino-acid sequence, 327 residues long: tRNA uridine(34) hydroxylase (327 aa).

In terms of domain architecture, Rhodanese spans 130–224 (LDEDTVVLDT…YGKDPEVQGE (95 aa)). Residue cysteine 184 is the Cysteine persulfide intermediate of the active site.

This sequence belongs to the TrhO family.

The catalysed reaction is uridine(34) in tRNA + AH2 + O2 = 5-hydroxyuridine(34) in tRNA + A + H2O. In terms of biological role, catalyzes oxygen-dependent 5-hydroxyuridine (ho5U) modification at position 34 in tRNAs. In Streptococcus thermophilus (strain ATCC BAA-250 / LMG 18311), this protein is tRNA uridine(34) hydroxylase.